The chain runs to 246 residues: 1-(5-phosphoribosyl)-5-[(5-phosphoribosylamino)methylideneamino] imidazole-4-carboxamide isomerase (246 aa).

D8 (proton acceptor) is an active-site residue. D131 functions as the Proton donor in the catalytic mechanism.

The protein belongs to the HisA/HisF family.

It is found in the cytoplasm. It carries out the reaction 1-(5-phospho-beta-D-ribosyl)-5-[(5-phospho-beta-D-ribosylamino)methylideneamino]imidazole-4-carboxamide = 5-[(5-phospho-1-deoxy-D-ribulos-1-ylimino)methylamino]-1-(5-phospho-beta-D-ribosyl)imidazole-4-carboxamide. Its pathway is amino-acid biosynthesis; L-histidine biosynthesis; L-histidine from 5-phospho-alpha-D-ribose 1-diphosphate: step 4/9. The protein is 1-(5-phosphoribosyl)-5-[(5-phosphoribosylamino)methylideneamino] imidazole-4-carboxamide isomerase of Lactococcus lactis subsp. cremoris (strain SK11).